The primary structure comprises 298 residues: Bifunctional protein FolD (298 aa).

NADP(+) contacts are provided by residues glycine 165–serine 167, serine 190, and isoleucine 231.

Belongs to the tetrahydrofolate dehydrogenase/cyclohydrolase family. In terms of assembly, homodimer.

The catalysed reaction is (6R)-5,10-methylene-5,6,7,8-tetrahydrofolate + NADP(+) = (6R)-5,10-methenyltetrahydrofolate + NADPH. The enzyme catalyses (6R)-5,10-methenyltetrahydrofolate + H2O = (6R)-10-formyltetrahydrofolate + H(+). Its pathway is one-carbon metabolism; tetrahydrofolate interconversion. Functionally, catalyzes the oxidation of 5,10-methylenetetrahydrofolate to 5,10-methenyltetrahydrofolate and then the hydrolysis of 5,10-methenyltetrahydrofolate to 10-formyltetrahydrofolate. The sequence is that of Bifunctional protein FolD from Prochlorococcus marinus (strain MIT 9312).